Here is a 520-residue protein sequence, read N- to C-terminus: Cytochrome P450 4F3 (520 aa).

A helical transmembrane segment spans residues 11 to 31; it reads LWPMAASPWLLLLLVGASWLL. Heme-binding residues include E328 and C468.

Belongs to the cytochrome P450 family. The cofactor is heme. In terms of tissue distribution, selectively expressed in blood neutrophils and bone marrow cells. Coexpressed with CYP4F3B in prostate, ileum and trachea. Selectively expressed in liver and kidney. It is also the predominant CYP4F isoform in trachea and tissues of the gastrointestinal tract.

Its subcellular location is the endoplasmic reticulum membrane. It localises to the microsome membrane. It carries out the reaction an organic molecule + reduced [NADPH--hemoprotein reductase] + O2 = an alcohol + oxidized [NADPH--hemoprotein reductase] + H2O + H(+). The catalysed reaction is leukotriene B4 + reduced [NADPH--hemoprotein reductase] + O2 = 20-hydroxy-leukotriene B4 + oxidized [NADPH--hemoprotein reductase] + H2O + H(+). It catalyses the reaction 20-hydroxy-leukotriene B4 + reduced [NADPH--hemoprotein reductase] + O2 = 20-oxo-leukotriene B4 + oxidized [NADPH--hemoprotein reductase] + 2 H2O + H(+). The enzyme catalyses 20-oxo-leukotriene B4 + reduced [NADPH--hemoprotein reductase] + O2 = 20-carboxy-leukotriene B4 + oxidized [NADPH--hemoprotein reductase] + H2O + 2 H(+). It carries out the reaction (5Z,8Z,11Z)-eicosatrienoate + reduced [NADPH--hemoprotein reductase] + O2 = 20-hydroxy-(5Z,8Z,11Z)-eicosatrienoate + oxidized [NADPH--hemoprotein reductase] + H2O + H(+). The catalysed reaction is (5Z,8Z,11Z,14Z)-eicosatetraenoate + reduced [NADPH--hemoprotein reductase] + O2 = 20-hydroxy-(5Z,8Z,11Z,14Z)-eicosatetraenoate + oxidized [NADPH--hemoprotein reductase] + H2O + H(+). It catalyses the reaction (5Z,8Z,11Z,14Z,17Z)-eicosapentaenoate + reduced [NADPH--hemoprotein reductase] + O2 = 19-hydroxy-(5Z,8Z,11Z,14Z,17Z)-eicosapentaenoate + oxidized [NADPH--hemoprotein reductase] + H2O + H(+). The enzyme catalyses (5Z,8Z,11Z,14Z,17Z)-eicosapentaenoate + reduced [NADPH--hemoprotein reductase] + O2 = 20-hydroxy-(5Z,8Z,11Z,14Z,17Z)-eicosapentaenoate + oxidized [NADPH--hemoprotein reductase] + H2O + H(+). It carries out the reaction (4Z,7Z,10Z,13Z,16Z,19Z)-docosahexaenoate + reduced [NADPH--hemoprotein reductase] + O2 = 21-hydroxy-(4Z,7Z,10Z,13Z,16Z,19Z)-docosahexaenoate + oxidized [NADPH--hemoprotein reductase] + H2O + H(+). The catalysed reaction is (4Z,7Z,10Z,13Z,16Z,19Z)-docosahexaenoate + reduced [NADPH--hemoprotein reductase] + O2 = 22-hydroxy-(4Z,7Z,10Z,13Z,16Z,19Z)-docosahexaenoate + oxidized [NADPH--hemoprotein reductase] + H2O + H(+). It catalyses the reaction 8,9-epoxy-(5Z,11Z,14Z)-eicosatrienoate + reduced [NADPH--hemoprotein reductase] + O2 = 20-hydroxy-8,9-epoxy-(5Z,11Z,14Z)-eicosatrienoate + oxidized [NADPH--hemoprotein reductase] + H2O + H(+). The enzyme catalyses 11,12-epoxy-(5Z,8Z,14Z)-eicosatrienoate + reduced [NADPH--hemoprotein reductase] + O2 = 20-hydroxy-11,12-epoxy-(5Z,8Z,14Z)-eicosatrienoate + oxidized [NADPH--hemoprotein reductase] + H2O + H(+). It carries out the reaction 14,15-epoxy-(5Z,8Z,11Z)-eicosatrienoate + reduced [NADPH--hemoprotein reductase] + O2 = 20-hydroxy-14,15-epoxy-(5Z,8Z,11Z)-eicosatrienoate + oxidized [NADPH--hemoprotein reductase] + H2O + H(+). The catalysed reaction is 12,13-epoxy-(9Z)-octadecenoate + reduced [NADPH--hemoprotein reductase] + O2 = 18-hydroxy-12,13-epoxy-(9Z)-octadecenoate + oxidized [NADPH--hemoprotein reductase] + H2O + H(+). It catalyses the reaction 9,10-epoxy-(12Z)-octadecenoate + reduced [NADPH--hemoprotein reductase] + O2 = 18-hydroxy-9,10-epoxy-(12Z)-octadecenoate + oxidized [NADPH--hemoprotein reductase] + H2O + H(+). The enzyme catalyses 9,10-epoxyoctadecanoate + reduced [NADPH--hemoprotein reductase] + O2 = 18-hydroxy-9,10-epoxy-octadecanoate + oxidized [NADPH--hemoprotein reductase] + H2O + H(+). It carries out the reaction (12R)-hydroxy-(9Z)-octadecenoate + reduced [NADPH--hemoprotein reductase] + O2 = (12R),18-dihydroxy-(9Z)-octadecenoate + oxidized [NADPH--hemoprotein reductase] + H2O + H(+). The catalysed reaction is 12-hydroxyoctadecanoate + reduced [NADPH--hemoprotein reductase] + O2 = 12,18-dihydroxyoctadecanoate + oxidized [NADPH--hemoprotein reductase] + H2O + H(+). It catalyses the reaction 5-hydroxy-(6E,8Z,11Z,14Z)-eicosatetraenoate + reduced [NADPH--hemoprotein reductase] + O2 = 5,20-dihydroxy-(6E,8Z,11Z,14Z)-eicosatetraenoate + oxidized [NADPH--hemoprotein reductase] + H2O + H(+). The enzyme catalyses 8-hydroxy-(5Z,9E,11Z,14Z)-eicosatetraenoate + reduced [NADPH--hemoprotein reductase] + O2 = 8,20-dihydroxy-(5Z,9E,11Z,14Z)-eicosatetraenoate + oxidized [NADPH--hemoprotein reductase] + H2O + H(+). It carries out the reaction 12-hydroxy-(5Z,8Z,10E,14Z)-eicosatetraenoate + reduced [NADPH--hemoprotein reductase] + O2 = 12,20-dihydroxy-(5Z,8Z,10E,14Z)-eicosatetraenoate + oxidized [NADPH--hemoprotein reductase] + H2O + H(+). The catalysed reaction is 5-hydroxy-(6E,8Z,11Z,14Z,17Z)-eicosapentaenoate + reduced [NADPH--hemoprotein reductase] + O2 = 5,20-dihydroxy-(6E,8Z,11Z,14Z,17Z)-eicosapentaenoate + oxidized [NADPH--hemoprotein reductase] + H2O + H(+). It catalyses the reaction lipoxin A4 + reduced [NADPH--hemoprotein reductase] + O2 = 20-hydroxy-lipoxin A4 + oxidized [NADPH--hemoprotein reductase] + H2O + H(+). The enzyme catalyses lipoxin B4 + reduced [NADPH--hemoprotein reductase] + O2 = 20-hydroxy-lipoxin B4 + oxidized [NADPH--hemoprotein reductase] + H2O + H(+). It carries out the reaction 22-hydroxydocosanoate + reduced [NADPH--hemoprotein reductase] + O2 = 22-oxodocosanoate + oxidized [NADPH--hemoprotein reductase] + 2 H2O + H(+). The catalysed reaction is 22-oxodocosanoate + reduced [NADPH--hemoprotein reductase] + O2 = docosanedioate + oxidized [NADPH--hemoprotein reductase] + H2O + 2 H(+). It catalyses the reaction docosanoate + reduced [NADPH--hemoprotein reductase] + O2 = 22-hydroxydocosanoate + oxidized [NADPH--hemoprotein reductase] + H2O + H(+). The enzyme catalyses tetracosanoate + reduced [NADPH--hemoprotein reductase] + O2 = 24-hydroxytetracosanoate + oxidized [NADPH--hemoprotein reductase] + H2O + H(+). It carries out the reaction hexacosanoate + reduced [NADPH--hemoprotein reductase] + O2 = 26-hydroxyhexacosanoate + oxidized [NADPH--hemoprotein reductase] + H2O + H(+). The catalysed reaction is 26-hydroxyhexacosanoate + reduced [NADPH--hemoprotein reductase] + O2 = 26-oxohexacosanoate + oxidized [NADPH--hemoprotein reductase] + 2 H2O + H(+). It catalyses the reaction 26-oxohexacosanoate + reduced [NADPH--hemoprotein reductase] + O2 = hexacosanedioate + oxidized [NADPH--hemoprotein reductase] + H2O + 2 H(+). The enzyme catalyses 3-hydroxyoctadecanoate + reduced [NADPH--hemoprotein reductase] + O2 = 3,18-dihydroxyoctadecanoate + oxidized [NADPH--hemoprotein reductase] + H2O + H(+). It carries out the reaction 3-hydroxyhexadecanoate + reduced [NADPH--hemoprotein reductase] + O2 = 3,16-dihydroxyhexadecanoate + oxidized [NADPH--hemoprotein reductase] + H2O + H(+). It participates in lipid metabolism; leukotriene B4 degradation. Its pathway is lipid metabolism; arachidonate metabolism. With respect to regulation, inhibited by carbon monoxide (CO). A cytochrome P450 monooxygenase involved in the metabolism of various endogenous substrates, including fatty acids and their oxygenated derivatives (oxylipins). Mechanistically, uses molecular oxygen inserting one oxygen atom into a substrate, and reducing the second into a water molecule, with two electrons provided by NADPH via cytochrome P450 reductase (CPR; NADPH-ferrihemoprotein reductase). May play a role in inactivation of pro-inflammatory and anti-inflammatory oxylipins during the resolution of inflammation. Functionally, catalyzes predominantly the oxidation of the terminal carbon (omega-oxidation) of oxylipins in myeloid cells, displaying higher affinity for arachidonate metabolite leukotriene B4 (LTB4). Inactivates LTB4 via three successive oxidative transformations to 20-hydroxy-LTB4, then to 20-oxo-LTB4 and to 20-carboxy-LTB4. Has omega-hydroxylase activity toward long-chain fatty acid epoxides with preference for 8,9-epoxy-(5Z,11Z,14Z)-eicosatrienoate (EET) and 9,10-epoxyoctadecanoate. Omega-hydroxylates monohydroxy polyunsaturated fatty acids (PUFAs), including hydroxyeicosatetraenoates (HETEs) and hydroxyeicosapentaenoates (HEPEs), to dihydroxy compounds. Contributes to the degradation of saturated very long-chain fatty acids (VLCFAs) such as docosanoic acid, by catalyzing successive omega-oxidations to the corresponding dicarboxylic acid, thereby initiating chain shortening. Has low hydroxylase activity toward PUFAs. Its function is as follows. Catalyzes predominantly the oxidation of the terminal carbon (omega-oxidation) of polyunsaturated fatty acids (PUFAs). Participates in the conversion of arachidonic acid to 20-hydroxyeicosatetraenoic acid (20-HETE), a signaling molecule acting both as vasoconstrictive and natriuretic with overall effect on arterial blood pressure. Has high omega-hydroxylase activity toward other PUFAs, including eicosatrienoic acid (ETA), eicosapentaenoic acid (EPA) and docosahexaenoic acid (DHA). Can also catalyze the oxidation of the penultimate carbon (omega-1 oxidation) of PUFAs with lower efficiency. Contributes to the degradation of saturated very long-chain fatty acids (VLCFAs) such as docosanoic acid and hexacosanoic acid, by catalyzing successive omega-oxidations to the corresponding dicarboxylic acids, thereby initiating chain shortening. Omega-hydroxylates long-chain 3-hydroxy fatty acids, likely initiating the oxidative conversion to the corresponding 3-hydroxydicarboxylic fatty acids. Has omega-hydroxylase activity toward long-chain fatty acid epoxides with preference for 8,9-epoxy-(5Z,11Z,14Z)-eicosatrienoate (EET) and 9,10-epoxyoctadecanoate. This chain is Cytochrome P450 4F3, found in Homo sapiens (Human).